The following is a 708-amino-acid chain: O-antigen chain terminator bifunctional methyltransferase/kinase WbdD (708 aa).

Positions 1–210 (MTKDLNTLVS…VPRPMYLVSN (210 aa)) are methyltransferase. S-adenosyl-L-methionine-binding positions include 16-17 (YQ), R36, G61, 82-87 (DFQQEN), 108-111 (GRIE), and L128. Residues 211 to 459 (HRVLINDFNQ…AKLPSAEQQR (249 aa)) form a kinase region. ATP contacts are provided by residues P229, H237, 241–243 (RRY), K252, E274, 309–311 (EKL), M358, and D369. Positions 485 to 594 (AGSEALRGQI…EIEKIHRSRS (110 aa)) form a coiled coil. A required for membrane-binding region spans residues 601-669 (YRYLGLQIHL…RLYRRMNPLP (69 aa)). Residues 687–708 (VMHPELLPPEVYEIYLKLTKNK) are required for localizing WbdA to the membrane.

It belongs to the WbdD family. Homotrimer in solution. Interacts with WbdA.

It is found in the cell inner membrane. It carries out the reaction 3-O-phospho-alpha-D-Man-(1-&gt;2)-alpha-D-Man-(1-&gt;2)-[alpha-D-Man-(1-&gt;3)-alpha-D-Man-(1-&gt;3)-alpha-D-Man-(1-&gt;2)-alpha-D-Man-(1-&gt;2)](n)-alpha-D-Man-(1-&gt;3)-alpha-D-Man-(1-&gt;3)-alpha-D-Man-(1-&gt;3)-alpha-D-GlcNAc-di-trans,octa-cis-undecaprenyl diphosphate + S-adenosyl-L-methionine = 3-O-methylphospho-alpha-D-Man-(1-&gt;2)-alpha-D-Man-(1-&gt;2)-[alpha-D-Man-(1-&gt;3)-alpha-D-Man-(1-&gt;3)-alpha-D-Man-(1-&gt;2)-alpha-D-Man-(1-&gt;2)](n)-alpha-D-Man-(1-&gt;3)-alpha-D-Man-(1-&gt;3)-alpha-D-Man-(1-&gt;3)-alpha-D-GlcNAc-di-trans,octa-cis-undecaprenyl diphosphate + S-adenosyl-L-homocysteine. It catalyses the reaction alpha-D-Man-(1-&gt;2)-alpha-D-Man-(1-&gt;2)-[alpha-D-Man-(1-&gt;3)-alpha-D-Man-(1-&gt;3)-alpha-D-Man-(1-&gt;2)-alpha-D-Man-(1-&gt;2)](n)-alpha-D-Man-(1-&gt;3)-alpha-D-Man-(1-&gt;3)-alpha-D-Man-(1-&gt;3)-alpha-D-GlcNAc-di-trans,octa-cis-undecaprenyl diphosphate + ATP = 3-O-phospho-alpha-D-Man-(1-&gt;2)-alpha-D-Man-(1-&gt;2)-[alpha-D-Man-(1-&gt;3)-alpha-D-Man-(1-&gt;3)-alpha-D-Man-(1-&gt;2)-alpha-D-Man-(1-&gt;2)](n)-alpha-D-Man-(1-&gt;3)-alpha-D-Man-(1-&gt;3)-alpha-D-Man-(1-&gt;3)-alpha-D-GlcNAc-di-trans,octa-cis-undecaprenyl diphosphate + ADP + H(+). The protein operates within bacterial outer membrane biogenesis; LPS O-antigen biosynthesis. Its function is as follows. Regulates the length of the LPS O-antigen polysaccharide chain. Stops the polymerization of the chain by phosphorylating and then methylating the phosphate on the terminal sugar. This terminal modification is essential for export of the O-antigen across the inner membrane. WbdD is also required for correct localization of the WbdA mannosyltransferase. This chain is O-antigen chain terminator bifunctional methyltransferase/kinase WbdD, found in Escherichia coli.